We begin with the raw amino-acid sequence, 767 residues long: Protein hunchback (767 aa).

3 disordered regions span residues 30 to 51, 105 to 127, and 174 to 212; these read EPGHHLDGNSVASSPRQSPIPS, QQQYQQHFQAAQQQHHHHHHLMG, and EKLQALTPPMDVTPPKSPAKSSQSNIEPEKEHDQMSNSS. The segment covering 39–51 has biased composition (polar residues); it reads SVASSPRQSPIPS. Residues 105 to 117 show a composition bias toward low complexity; sequence QQQYQQHFQAAQQ. The segment covering 200–212 has biased composition (basic and acidic residues); the sequence is EPEKEHDQMSNSS. C2H2-type zinc fingers lie at residues 242 to 264, 271 to 293, 299 to 321, and 327 to 351; these read YKCKTCGVVAITKVDFWAHTRTH, LQCPKCPFVTEFKHHLEYHIRKH, FQCDKCSYTCVNKSMLNSHRKSH, and YRCADCDYATKYCHSFKLHLRKYGH. 3 disordered regions span residues 357 to 424, 518 to 570, and 610 to 704; these read LDED…TSQL, QLQQ…QPQQ, and GVMT…APPS. Residues 386 to 397 are compositionally biased toward gly residues; sequence IASGGSGSGSGS. The segment covering 518-527 has biased composition (low complexity); the sequence is QLQQQNQQQS. The segment covering 528 to 537 has biased composition (acidic residues); sequence DNEEEEQDDE. Low complexity predominate over residues 661-704; it reads ANTSASSTASSSGNSSNASSNSNGNSSSNSSSSGTNSAAAAPPS. 2 C2H2-type zinc fingers span residues 714-736 and 742-766; these read YECKYCDIFFKDAVLYTIHMGYH and FKCNMCGEKCDGPVGLFVHMARNAH.

The protein belongs to the hunchback C2H2-type zinc-finger protein family.

Its subcellular location is the nucleus. Gap class segmentation protein that controls development of head structures. The polypeptide is Protein hunchback (hb) (Drosophila orena (Fruit fly)).